A 348-amino-acid chain; its full sequence is tRNA N6-adenosine threonylcarbamoyltransferase (348 aa).

Residues His-120 and His-124 each coordinate Fe cation. Substrate is bound by residues 143–147 (LVSGG), Asp-176, Gly-189, and Asn-282. Asp-310 lines the Fe cation pocket.

This sequence belongs to the KAE1 / TsaD family. Requires Fe(2+) as cofactor.

It localises to the cytoplasm. It catalyses the reaction L-threonylcarbamoyladenylate + adenosine(37) in tRNA = N(6)-L-threonylcarbamoyladenosine(37) in tRNA + AMP + H(+). Required for the formation of a threonylcarbamoyl group on adenosine at position 37 (t(6)A37) in tRNAs that read codons beginning with adenine. Is involved in the transfer of the threonylcarbamoyl moiety of threonylcarbamoyl-AMP (TC-AMP) to the N6 group of A37, together with TsaE and TsaB. TsaD likely plays a direct catalytic role in this reaction. The chain is tRNA N6-adenosine threonylcarbamoyltransferase from Paracidovorax citrulli (strain AAC00-1) (Acidovorax citrulli).